The primary structure comprises 394 residues: Nuclear pore glycoprotein p62 (394 aa).

5 consecutive repeat copies span residues 22-23, 50-51, 75-76, 77-78, and 116-117. The tract at residues 22-117 is 5 X 2 AA repeats of F-G; sequence FGLSTGTPAA…GTSAAPPAFG (96 aa). Residues 45-57 are compositionally biased toward low complexity; sequence KTTFSFGTPAPTA. The tract at residues 45–73 is disordered; sequence KTTFSFGTPAPTAGIGGGDADNSKAQAPP. Positions 211–341 form a coiled coil; that stretch reads SYHQLEEHIN…DNLNEANKGQ (131 aa).

Belongs to the nucleoporin NSP1/NUP62 family. Expressed in adult male accessory glands (at protein level).

The protein resides in the nucleus. It localises to the chromosome. Its subcellular location is the nucleus envelope. It is found in the nuclear pore complex. The protein localises to the cytoplasm. The protein resides in the cytoskeleton. It localises to the spindle pole. Its subcellular location is the microtubule organizing center. It is found in the centrosome. Essential component of the nuclear pore complex. The N-terminal is probably involved in nucleocytoplasmic transport. The C-terminal is involved in protein-protein interaction probably via coiled-coil formation, promotes its association with centrosomes and may function in anchorage of Nup62 to the pore complex. Binds to transcriptionally active genes. Negatively regulates chromatin attachment to the nuclear envelope, probably by preventing chromatin tethering by Nup154. The protein is Nuclear pore glycoprotein p62 of Drosophila melanogaster (Fruit fly).